A 222-amino-acid chain; its full sequence is Ribosome maturation factor RimM (222 aa).

Residues 1–22 (MTERKQGAARPLNRPLVQPQGE) form a disordered region. Residues 145–222 (EDEFYWVDLI…RIVVDWGLDY (78 aa)) form the PRC barrel domain.

This sequence belongs to the RimM family. Binds ribosomal protein uS19.

It localises to the cytoplasm. An accessory protein needed during the final step in the assembly of 30S ribosomal subunit, possibly for assembly of the head region. Essential for efficient processing of 16S rRNA. May be needed both before and after RbfA during the maturation of 16S rRNA. It has affinity for free ribosomal 30S subunits but not for 70S ribosomes. The protein is Ribosome maturation factor RimM of Cupriavidus necator (strain ATCC 17699 / DSM 428 / KCTC 22496 / NCIMB 10442 / H16 / Stanier 337) (Ralstonia eutropha).